Reading from the N-terminus, the 681-residue chain is Methionine--tRNA ligase (681 aa).

The 'HIGH' region signature appears at 27 to 37; sequence DYANGTPHIGH. A 'KMSKS' region motif is present at residues 316–320; sequence KMGKS. Lys319 is a binding site for ATP. The segment at 522–571 is disordered; it reads FPKPEPKADETKNAEAKPPKPQAKKEKKTVTDTAPAKTTEQKPEAAAPAQ. The span at 525-539 shows a compositional bias: basic and acidic residues; that stretch reads PEPKADETKNAEAKP. A tRNA-binding domain is found at 580-681; it reads DFAKIDLRIA…LDLPSGTKVR (102 aa).

This sequence belongs to the class-I aminoacyl-tRNA synthetase family. MetG type 2B subfamily. In terms of assembly, homodimer.

It localises to the cytoplasm. The catalysed reaction is tRNA(Met) + L-methionine + ATP = L-methionyl-tRNA(Met) + AMP + diphosphate. Is required not only for elongation of protein synthesis but also for the initiation of all mRNA translation through initiator tRNA(fMet) aminoacylation. The protein is Methionine--tRNA ligase (metG) of Deinococcus radiodurans (strain ATCC 13939 / DSM 20539 / JCM 16871 / CCUG 27074 / LMG 4051 / NBRC 15346 / NCIMB 9279 / VKM B-1422 / R1).